Reading from the N-terminus, the 126-residue chain is E3 ubiquitin-protein ligase PPP1R11 (126 aa).

The tract at residues 1–25 is disordered; it reads MAEAGAGLSETVTETTVTVTTEPEN. At Ala-2 the chain carries N-acetylalanine. The segment covering 10 to 22 has biased composition (low complexity); the sequence is ETVTETTVTVTTE. Residues 52-62 are atypical RING finger domain 1; the sequence is HMGRRSSKCCC. The tract at residues 70–126 is disordered; that stretch reads FGESSTESDEEEEEGCGHTHCVRGHRKGRRRATLGPTPTTPPQPPDPSQPPPGPMQH. A phosphoserine mark is found at Ser-73 and Ser-74. Thr-75 carries the post-translational modification Phosphothreonine. Ser-77 is subject to Phosphoserine. Residues 85-94 form an atypical RING finger domain 2 region; it reads CGHTHCVRGH. Positions 89–101 are enriched in basic residues; the sequence is HCVRGHRKGRRRA. A compositionally biased stretch (pro residues) spans 107–126; that stretch reads PTTPPQPPDPSQPPPGPMQH. The residue at position 109 (Thr-109) is a Phosphothreonine.

Interacts with TLR2 and UBE2D2. Post-translationally, auto-ubiquitinated. Widely expressed.

The enzyme catalyses S-ubiquitinyl-[E2 ubiquitin-conjugating enzyme]-L-cysteine + [acceptor protein]-L-lysine = [E2 ubiquitin-conjugating enzyme]-L-cysteine + N(6)-ubiquitinyl-[acceptor protein]-L-lysine.. The protein operates within protein modification; protein ubiquitination. In terms of biological role, atypical E3 ubiquitin-protein ligase which ubiquitinates TLR2 at 'Lys-754' leading to its degradation by the proteasome. Plays a role in regulating inflammatory cytokine release and gram-positive bacterial clearance by functioning, in part, through the ubiquitination and degradation of TLR2. Inhibitor of protein phosphatase 1. This chain is E3 ubiquitin-protein ligase PPP1R11 (PPP1R11), found in Homo sapiens (Human).